A 316-amino-acid polypeptide reads, in one-letter code: Pantothenate kinase (316 aa).

Position 95–102 (95–102) interacts with ATP; it reads GSVSVGKS.

It belongs to the prokaryotic pantothenate kinase family.

It localises to the cytoplasm. The catalysed reaction is (R)-pantothenate + ATP = (R)-4'-phosphopantothenate + ADP + H(+). It participates in cofactor biosynthesis; coenzyme A biosynthesis; CoA from (R)-pantothenate: step 1/5. This Haemophilus ducreyi (strain 35000HP / ATCC 700724) protein is Pantothenate kinase.